We begin with the raw amino-acid sequence, 134 residues long: uncharacterized protein (134 aa).

The protein resides in the mitochondrion. This is an uncharacterized protein from Saccharomyces cerevisiae (strain ATCC 204508 / S288c) (Baker's yeast).